The chain runs to 99 residues: Putative pterin-4-alpha-carbinolamine dehydratase (99 aa).

Belongs to the pterin-4-alpha-carbinolamine dehydratase family.

The catalysed reaction is (4aS,6R)-4a-hydroxy-L-erythro-5,6,7,8-tetrahydrobiopterin = (6R)-L-erythro-6,7-dihydrobiopterin + H2O. This Synechococcus sp. (strain CC9311) protein is Putative pterin-4-alpha-carbinolamine dehydratase.